Reading from the N-terminus, the 1483-residue chain is ABC multidrug transporter atrA (1483 aa).

Basic and acidic residues predominate over residues 1–19; it reads MASHKKSEDPLVVKDRQEQ. The interval 1–92 is disordered; that stretch reads MASHKKSEDP…NDPAVDPQGP (92 aa). Asn32 is a glycosylation site (N-linked (GlcNAc...) asparagine). Residues 71–82 show a composition bias toward polar residues; sequence PTRTSTLATISE. N-linked (GlcNAc...) asparagine glycans are attached at residues Asn123 and Asn322. The 252-residue stretch at 147 to 398 folds into the ABC transporter 1 domain; that stretch reads FRIGEMMKNR…FERQGWECPQ (252 aa). A run of 5 helical transmembrane segments spans residues 512–532, 539–559, 595–615, 620–640, and 654–674; these read TVST…VFYG, GFTA…LIAM, IPVK…LAGL, GQFF…SAVF, and MGLA…VLPV. A glycan (N-linked (GlcNAc...) asparagine) is linked at Asn718. The helical transmembrane segment at 759–779 threads the bilayer; that stretch reads FGILIAFLVGFMMIYFIATEL. The N-linked (GlcNAc...) asparagine glycan is linked to Asn780. The 244-residue stretch at 840 to 1083 folds into the ABC transporter 2 domain; it reads FTWRDVCYDI…LLNYFESNGA (244 aa). 876–883 is an ATP binding site; sequence GVSGAGKT. N-linked (GlcNAc...) asparagine glycans are attached at residues Asn947 and Asn1146. 5 helical membrane passes run 1179–1199, 1215–1235, 1254–1274, 1293–1313, and 1320–1340; these read YIAS…FSFF, LFML…LFVT, AFLI…GILT, LVLL…HMAI, and ETAS…CGVM. Asn1413 carries an N-linked (GlcNAc...) asparagine glycan. Residues 1444–1464 form a helical membrane-spanning segment; it reads FGLMWVYIVFNIFLATMLYYT. An N-linked (GlcNAc...) asparagine glycan is attached at Asn1471.

This sequence belongs to the ABC transporter superfamily. ABCG family. PDR (TC 3.A.1.205) subfamily.

Its subcellular location is the cell membrane. The catalysed reaction is (R)-miconazole(in) + ATP + H2O = (R)-miconazole(out) + ADP + phosphate + H(+). Functionally, pleiotropic ABC efflux transporter involved in the basal level of azole susceptibility. Confers resistance to miconazole and clotrimazole. In Aspergillus oryzae (strain ATCC 42149 / RIB 40) (Yellow koji mold), this protein is ABC multidrug transporter atrA.